The sequence spans 572 residues: Mitochondrial chaperone TCM62 (572 aa).

The transit peptide at 1-16 directs the protein to the mitochondrion; sequence MLRNCLRKLGNHQTKC. Residues 17 to 471 are Mitochondrial matrix-facing; sequence SVKTLHTPIY…KANEPNFMTK (455 aa). Residues 472-488 traverse the membrane as a helical segment; that stretch reads VGINAVLSAVILPSEVA. The Mitochondrial intermembrane segment spans residues 489-572; sequence FKNAYGYNYY…VYKKPERHKA (84 aa).

It belongs to the chaperonin (HSP60) family. Forms a high molecular mass protein complex of approximately 850 kDa.

The protein resides in the mitochondrion inner membrane. In terms of biological role, chaperone. Required for the assembly of succinate dehydrogenase subunits. Ensures mitochondrial gene expression at elevated temperatures and prevents heat-aggregation of the ribosomal subunit VAR1. The sequence is that of Mitochondrial chaperone TCM62 (TCM62) from Saccharomyces cerevisiae (strain ATCC 204508 / S288c) (Baker's yeast).